A 452-amino-acid chain; its full sequence is Cholesterol 7-desaturase nvd 2 (452 aa).

2 consecutive transmembrane segments (helical) span residues 6–26 (LIRITVMVITSERLLILMGLC) and 32–52 (FPVMIRVVFNAAVAIVIALVM). One can recognise a Rieske domain in the interval 107–212 (WFKVADSTWI…CCEVDGMAYL (106 aa)). C148, H150, C169, and H172 together coordinate [2Fe-2S] cluster.

Belongs to the cholesterol 7-desaturase family. It depends on [2Fe-2S] cluster as a cofactor.

The protein localises to the membrane. It carries out the reaction cholesterol + NADPH + O2 + H(+) = 7-dehydrocholesterol + NADP(+) + 2 H2O. The enzyme catalyses cholesterol + NADH + O2 + H(+) = 7-dehydrocholesterol + NAD(+) + 2 H2O. It participates in steroid hormone biosynthesis; dafachronic acid biosynthesis. Its function is as follows. Catalyzes the production of 7-dehydrocholesterol (7-DHC or cholesta-5,7-dien-3beta-ol) by inserting a double bond (desaturating) at the C7-C8 single bond of cholesterol. Essential regulator of steroid biosynthesis as this reaction is the first step in the synthesis of the steroid hormone Delta(7)-dafachronic acid. This is Cholesterol 7-desaturase nvd 2 from Ciona intestinalis (Transparent sea squirt).